A 516-amino-acid chain; its full sequence is Flavonoid-6-hydroxylase (516 aa).

A helical membrane pass occupies residues 3-23 (FNAAVCAALAFISLLSYYLIW). Cysteine 455 is a binding site for heme.

This sequence belongs to the cytochrome P450 family. Requires heme as cofactor.

It localises to the membrane. It catalyses the reaction genkwanin + reduced [NADPH--hemoprotein reductase] + O2 = scutellarein 7-methyl ether + oxidized [NADPH--hemoprotein reductase] + H2O. The catalysed reaction is (2S)-sakuranetin + reduced [NADPH--hemoprotein reductase] + O2 = (2S)-7-methylcarthamidin + oxidized [NADPH--hemoprotein reductase] + H2O + H(+). The enzyme catalyses apigenin 4',7-dimethyl ether + reduced [NADPH--hemoprotein reductase] + O2 = ladanein + oxidized [NADPH--hemoprotein reductase] + H2O + H(+). It carries out the reaction (2S)-naringenin 4',7-dimethyl ether + reduced [NADPH--hemoprotein reductase] + O2 = (2S)-carthamidin-4',7-dimethyl ether + oxidized [NADPH--hemoprotein reductase] + H2O + H(+). Its pathway is flavonoid metabolism. Its function is as follows. 6-OH hydroxylase involved in the biosynthesis of polymethoxylated flavonoids natural products such as pebrellin, aroma compounds which contribute to the flavor of peppermint, and exhibit pharmacological activities such as anti-allergic, anti-oxidant, antibacterial, anti-proliferative, and anti-inflammatory effects. Catalyzes the 6-hydroxylation of 7-O-methylated precursors such as the conversion of genkwanin (GENK) to scutellarein-7-methyl ether (SCU7Me). Can also use apigenin-7,4'-dimethyl ether (AdM), naringenin-7-methyl ether (SAK) and naringenin-7,4'-dimethyl ether (NdM) as substrates. The chain is Flavonoid-6-hydroxylase from Mentha piperita (Peppermint).